The chain runs to 325 residues: Transcription initiation factor IIB 2 (325 aa).

Positions 1-13 are enriched in polar residues; that stretch reads MSDSTIRTYSSDQ. The disordered stretch occupies residues 1-29; sequence MSDSTIRTYSSDQRQTDNDETVSTPDEDV. Residues 28-58 form a TFIIB-type zinc finger; that stretch reads DVLTCPECGGQVIDDEEHGESVCVDCGLVVE. Residues cysteine 32, cysteine 35, cysteine 50, and cysteine 53 each coordinate Zn(2+). A disordered region spans residues 73-93; that stretch reads STEKDEKSRVGAPTTNMMHDK. 2 tandem repeats follow at residues 144–227 and 238–319.

This sequence belongs to the TFIIB family.

Functionally, stabilizes TBP binding to an archaeal box-A promoter. Also responsible for recruiting RNA polymerase II to the pre-initiation complex (DNA-TBP-TFIIB). The protein is Transcription initiation factor IIB 2 of Halobacterium salinarum (strain ATCC 700922 / JCM 11081 / NRC-1) (Halobacterium halobium).